A 410-amino-acid polypeptide reads, in one-letter code: Serine/threonine transporter SstT (410 aa).

Helical transmembrane passes span Val11–Val31, Phe45–Ile65, Ile79–Phe99, Ala138–Leu158, Ile179–Ile199, Leu214–Phe234, Ile285–Leu305, Val327–Ile347, and Leu353–Val373.

It belongs to the dicarboxylate/amino acid:cation symporter (DAACS) (TC 2.A.23) family.

Its subcellular location is the cell membrane. The enzyme catalyses L-serine(in) + Na(+)(in) = L-serine(out) + Na(+)(out). It catalyses the reaction L-threonine(in) + Na(+)(in) = L-threonine(out) + Na(+)(out). Functionally, involved in the import of serine and threonine into the cell, with the concomitant import of sodium (symport system). The chain is Serine/threonine transporter SstT from Geobacillus thermodenitrificans (strain NG80-2).